The following is a 465-amino-acid chain: Kynurenine 3-monooxygenase (465 aa).

The disordered stretch occupies residues 1–26 (MSPGIVSQEVNGRQEPTEAARDERHG). Basic and acidic residues predominate over residues 15–25 (EPTEAARDERH). 2 consecutive transmembrane segments (helical) span residues 405–427 (LLFRLFPGWIPLYNSVSFSSMPY) and 440–462 (LLKRIFGATFLAAIVTGGAIYAQ).

The protein belongs to the aromatic-ring hydroxylase family. KMO subfamily. The cofactor is FAD.

The protein localises to the mitochondrion. The protein resides in the membrane. It carries out the reaction L-kynurenine + NADPH + O2 + H(+) = 3-hydroxy-L-kynurenine + NADP(+) + H2O. Its pathway is cofactor biosynthesis; NAD(+) biosynthesis; quinolinate from L-kynurenine: step 1/3. Its function is as follows. Catalyzes the hydroxylation of L-kynurenine (L-Kyn) to form 3-hydroxy-L-kynurenine (L-3OHKyn). Required for synthesis of quinolinic acid. The sequence is that of Kynurenine 3-monooxygenase from Drosophila melanogaster (Fruit fly).